Here is a 500-residue protein sequence, read N- to C-terminus: Probable malate:quinone oxidoreductase (500 aa).

The protein belongs to the MQO family. It depends on FAD as a cofactor.

The enzyme catalyses (S)-malate + a quinone = a quinol + oxaloacetate. The protein operates within carbohydrate metabolism; tricarboxylic acid cycle; oxaloacetate from (S)-malate (quinone route): step 1/1. This chain is Probable malate:quinone oxidoreductase, found in Bacillus mycoides (strain KBAB4) (Bacillus weihenstephanensis).